Here is a 166-residue protein sequence, read N- to C-terminus: Disulfide bond formation protein B (166 aa).

Over 1–11 (MCNKLFAGRRG) the chain is Cytoplasmic. Residues 12–28 (YFLGFVASFGLVGLALF) traverse the membrane as a helical segment. The Periplasmic portion of the chain corresponds to 29 to 46 (LQQKYNLEPCPLCISQRI). Cysteine 38 and cysteine 41 are disulfide-bonded. A helical membrane pass occupies residues 47-63 (AFMALGILFLLAALHNP). Residues 64-69 (GRVGRK) lie on the Cytoplasmic side of the membrane. Residues 70-87 (VYGLLHVIAAATGIGIAA) form a helical membrane-spanning segment. Topologically, residues 88–144 (RHIWIQANPDKVMAECGAGFDYIMETFPLKKALDLIFKGTGECSAIDWTLFGLTIPQ) are periplasmic. Cysteines 103 and 130 form a disulfide. Residues 145–163 (LSLIAFVGLGLFAVLLAFH) traverse the membrane as a helical segment. Residues 164–166 (KKA) are Cytoplasmic-facing.

The protein belongs to the DsbB family.

It is found in the cell inner membrane. Its function is as follows. Required for disulfide bond formation in some periplasmic proteins. Acts by oxidizing the DsbA protein. The polypeptide is Disulfide bond formation protein B (Methylobacillus flagellatus (strain ATCC 51484 / DSM 6875 / VKM B-1610 / KT)).